A 196-amino-acid polypeptide reads, in one-letter code: Putative adenylate kinase (196 aa).

Residues Gly10, Gly12, Lys13, Thr14, and Ser15 each contribute to the ATP site. The NMP stretch occupies residues 30-53; it reads YLNDLIKEEHLYSEVDEERDSVIA. Residues 118–128 are LID; it reads KRGYSEEKINE. Arg119 contributes to the ATP binding site.

The protein belongs to the adenylate kinase family. AK6 subfamily. As to quaternary structure, interacts with uS11. Not a structural component of 40S pre-ribosomes, but transiently interacts with them by binding to uS11.

The catalysed reaction is AMP + ATP = 2 ADP. It catalyses the reaction ATP + H2O = ADP + phosphate + H(+). Broad-specificity nucleoside monophosphate (NMP) kinase that catalyzes the reversible transfer of the terminal phosphate group between nucleoside triphosphates and monophosphates. Also has ATPase activity. Involved in the late maturation steps of the 30S ribosomal particles, specifically 16S rRNA maturation. While NMP activity is not required for ribosome maturation, ATPase activity is. Associates transiently with small ribosomal subunit protein uS11. ATP hydrolysis breaks the interaction with uS11. May temporarily remove uS11 from the ribosome to enable a conformational change of the ribosomal RNA that is needed for the final maturation step of the small ribosomal subunit. The polypeptide is Putative adenylate kinase (Methanosarcina mazei (strain ATCC BAA-159 / DSM 3647 / Goe1 / Go1 / JCM 11833 / OCM 88) (Methanosarcina frisia)).